A 671-amino-acid chain; its full sequence is Probable potassium transport system protein Kup 2 (671 aa).

The next 12 helical transmembrane spans lie at 18–38 (GFLI…LYAM), 60–80 (VSLV…LIAL), 103–123 (WLII…ALTP), 146–166 (AVMV…RFGA), 173–193 (FGPI…INSF), 218–238 (AGFF…ALYS), 252–272 (WPFV…WLLA), 292–312 (MVIY…QALI), 343–363 (LYIP…VLYF), 373–393 (YSLA…YFLI), 402–422 (IAII…ASLV), and 424–444 (FING…VMFI).

This sequence belongs to the HAK/KUP transporter (TC 2.A.72) family.

It localises to the cell membrane. The catalysed reaction is K(+)(in) + H(+)(in) = K(+)(out) + H(+)(out). Its function is as follows. Transport of potassium into the cell. Likely operates as a K(+):H(+) symporter. This Lactococcus lactis subsp. lactis (strain IL1403) (Streptococcus lactis) protein is Probable potassium transport system protein Kup 2.